The chain runs to 565 residues: Proline--tRNA ligase (565 aa).

This sequence belongs to the class-II aminoacyl-tRNA synthetase family. ProS type 1 subfamily. As to quaternary structure, homodimer.

It is found in the cytoplasm. It carries out the reaction tRNA(Pro) + L-proline + ATP = L-prolyl-tRNA(Pro) + AMP + diphosphate. Functionally, catalyzes the attachment of proline to tRNA(Pro) in a two-step reaction: proline is first activated by ATP to form Pro-AMP and then transferred to the acceptor end of tRNA(Pro). As ProRS can inadvertently accommodate and process non-cognate amino acids such as alanine and cysteine, to avoid such errors it has two additional distinct editing activities against alanine. One activity is designated as 'pretransfer' editing and involves the tRNA(Pro)-independent hydrolysis of activated Ala-AMP. The other activity is designated 'posttransfer' editing and involves deacylation of mischarged Ala-tRNA(Pro). The misacylated Cys-tRNA(Pro) is not edited by ProRS. This is Proline--tRNA ligase from Lactobacillus helveticus (strain DPC 4571).